Here is a 729-residue protein sequence, read N- to C-terminus: E3 ubiquitin-protein ligase SH3RF2 (729 aa).

The RING-type zinc finger occupies 12 to 53; the sequence is CPVCFEKLDVTAKVLPCQHTFCKPCLQRVFKAHKELRCPECR. Residues 78 to 105 are disordered; that stretch reads SGQSSGRGGSFRRPGTMTLQDGRKSRTN. 2 consecutive SH3 domains span residues 125 to 184 and 187 to 252; these read DGVP…VIKQ and QPPP…PNLT. A disordered region spans residues 258–297; that stretch reads EKNKGRQSSRTKNLSLVSSSSRGNTSTLRRGPGSRRKVPG. Polar residues predominate over residues 263–285; sequence RQSSRTKNLSLVSSSSRGNTSTL. The interval 370–459 is interaction with PAK4; the sequence is VVSLPGSQQH…RSPGLYTTWT (90 aa). Positions 380-441 constitute an SH3 3 domain; that stretch reads LSANMFVALH…PNNYVIPIFR (62 aa). Disordered regions lie at residues 497–526 and 610–677; these read STAG…QRPL and KSEP…SQPE. Over residues 517–526 the composition is skewed to polar residues; that stretch reads RKNGSLQRPL. The interaction with PPP1CA stretch occupies residues 641–646; that stretch reads KTVRFQ. At Ser649 the chain carries Phosphoserine.

It belongs to the SH3RF family. Interacts with FASLG and PPP1CA. Interacts with PAK4 and TNFRSF1A. Interacts with DLK1, MAP3K10/MLK2, MAPK8IP1/JIP1, MAPK8IP2/JIP2 and MAPK8IP3/JIP3. Interacts with RAC1 (both active GTP- or inactive GDP-bound forms). Autoubiquitinated. As to expression, heart (at protein level). Up-regulated in colon cancer tissues as compared to normal colon tissues (at protein level). Testis. In the heart, present in the apex, left atrium, right atrium, left ventricle and right ventricle, but not in the aorta.

The protein localises to the nucleus. The catalysed reaction is S-ubiquitinyl-[E2 ubiquitin-conjugating enzyme]-L-cysteine + [acceptor protein]-L-lysine = [E2 ubiquitin-conjugating enzyme]-L-cysteine + N(6)-ubiquitinyl-[acceptor protein]-L-lysine.. It participates in protein modification; protein ubiquitination. In terms of biological role, has E3 ubiquitin-protein ligase activity. Acts as an anti-apoptotic regulator of the JNK pathway by ubiquitinating and promoting the degradation of SH3RF1, a scaffold protein that is required for pro-apoptotic JNK activation. Facilitates TNF-alpha-mediated recruitment of adapter proteins TRADD and RIPK1 to TNFRSF1A and regulates PAK4 protein stability via inhibition of its ubiquitin-mediated proteasomal degradation. Inhibits PPP1CA phosphatase activity. The chain is E3 ubiquitin-protein ligase SH3RF2 (SH3RF2) from Homo sapiens (Human).